The primary structure comprises 221 residues: Josephin-like protein (221 aa).

Positions 1–37 are disordered; it reads MESPSARTLGNSLGDDSGNGNENGNGSGNGNTTMMPH. Low complexity predominate over residues 9 to 20; that stretch reads LGNSLGDDSGNG. In terms of domain architecture, Josephin spans 36–214; sequence PHGIYHERQT…DCKDKSQQRW (179 aa). Catalysis depends on cysteine 49, which acts as the Nucleophile. Histidine 152 acts as the Proton acceptor in catalysis.

It carries out the reaction Thiol-dependent hydrolysis of ester, thioester, amide, peptide and isopeptide bonds formed by the C-terminal Gly of ubiquitin (a 76-residue protein attached to proteins as an intracellular targeting signal).. Its function is as follows. May act as a deubiquitinating enzyme. This is Josephin-like protein from Drosophila melanogaster (Fruit fly).